The chain runs to 602 residues: uncharacterized protein (602 aa).

Asparagine 305, asparagine 497, and asparagine 577 each carry an N-linked (GlcNAc...) asparagine glycan.

N-glycosylated.

The protein resides in the vacuole. This is an uncharacterized protein from Saccharomyces cerevisiae (strain ATCC 204508 / S288c) (Baker's yeast).